A 20-amino-acid chain; its full sequence is Alpha-amylase (20 aa).

The enzyme catalyses Endohydrolysis of (1-&gt;4)-alpha-D-glucosidic linkages in polysaccharides containing three or more (1-&gt;4)-alpha-linked D-glucose units.. Strongly inhibited by Hg (2+). Inhibited by Zn (2+). Activated by Fe (2+), Mg (2+) and Ba (2+). Its function is as follows. Alpha-amylase active towards amylose, starch, amylopectin and maltodextrins. Has lower activity towards glycogen, and is not active towards alpha/beta-cyclodextrin. This Bacillus sp protein is Alpha-amylase.